Reading from the N-terminus, the 635-residue chain is Biosynthetic arginine decarboxylase (635 aa).

Position 100 is an N6-(pyridoxal phosphate)lysine (K100). Residue 282–292 coordinates substrate; that stretch reads LDIGGGLGVDY.

It belongs to the Orn/Lys/Arg decarboxylase class-II family. SpeA subfamily. The cofactor is Mg(2+). Pyridoxal 5'-phosphate is required as a cofactor.

The catalysed reaction is L-arginine + H(+) = agmatine + CO2. The protein operates within amine and polyamine biosynthesis; agmatine biosynthesis; agmatine from L-arginine: step 1/1. Its function is as follows. Catalyzes the biosynthesis of agmatine from arginine. The polypeptide is Biosynthetic arginine decarboxylase (Geotalea uraniireducens (strain Rf4) (Geobacter uraniireducens)).